The sequence spans 344 residues: 4-hydroxy-2-oxovalerate aldolase (344 aa).

The 253-residue stretch at 8 to 260 (VTLHDMSLRD…NHGIDLYKIM (253 aa)) folds into the Pyruvate carboxyltransferase domain. 16–17 (RD) provides a ligand contact to substrate. D17 provides a ligand contact to Mn(2+). H20 functions as the Proton acceptor in the catalytic mechanism. The substrate site is built by S170 and H199. Mn(2+)-binding residues include H199 and H201. Y290 is a substrate binding site.

This sequence belongs to the 4-hydroxy-2-oxovalerate aldolase family.

The catalysed reaction is (S)-4-hydroxy-2-oxopentanoate = acetaldehyde + pyruvate. This is 4-hydroxy-2-oxovalerate aldolase (mhpE) from Pseudoalteromonas translucida (strain TAC 125).